The primary structure comprises 640 residues: Sodium-dependent nutrient amino acid transporter 1 (640 aa).

The segment covering 1–13 (MELKPNGNHNNNN) has biased composition (low complexity). The tract at residues 1–25 (MELKPNGNHNNNNAAEKSEDTEKAK) is disordered. Over 1–30 (MELKPNGNHNNNNAAEKSEDTEKAKAERTN) the chain is Cytoplasmic. Residues 16 to 25 (EKSEDTEKAK) show a composition bias toward basic and acidic residues. A run of 3 helical transmembrane segments spans residues 31–51 (WGNGLEFLMSCISVSVGLGNV), 64–84 (GAFLIPYIIVLFLIGKPMYYL), and 117–137 (TICIISYYSSLLALTLYYLFV). N-linked (GlcNAc...) asparagine glycans are attached at residues N174, N181, and N197. The next 9 membrane-spanning stretches (helical) occupy residues 228–248 (PDWKLTLALLASWVVIFLVIM), 257–277 (AAYFLALFPYVVLFVLLIRAV), 306–326 (AVVQCFFSLAVGSGPIIMFAS), 340–360 (IVTTLDTLTSLLGGITIFAIL), 400–420 (LFSVLFFFMLFVLGIGSIVAL), 447–467 (CGFLMGLVYVTPGGQWILTLV), 473–493 (TYVVFILAIFELAGIVWIYGL), 515–535 (CWSFFTPVMMIIIFIYSMVTI), and 551–571 (VAGWLLFGIGAAQFPLWGLWY).

The protein belongs to the sodium:neurotransmitter symporter (SNF) (TC 2.A.22) family.

It is found in the membrane. Its function is as follows. Unusual broad substrate spectrum amino acid:sodium cotransporter that promotes absorption of the D isomers of essential amino acids. Neutral amino acids are the preferred substrates, especially methionine and phenylalanine. The protein is Sodium-dependent nutrient amino acid transporter 1 of Drosophila ananassae (Fruit fly).